Consider the following 160-residue polypeptide: Cytochrome b6-f complex subunit 4 (160 aa).

Helical transmembrane passes span 36 to 56 (LLYI…GLAV), 95 to 115 (LLGV…PFLE), and 131 to 151 (TVFL…TLPI).

Belongs to the cytochrome b family. PetD subfamily. As to quaternary structure, the 4 large subunits of the cytochrome b6-f complex are cytochrome b6, subunit IV (17 kDa polypeptide, petD), cytochrome f and the Rieske protein, while the 4 small subunits are petG, petL, petM and petN. The complex functions as a dimer.

It is found in the plastid. It localises to the chloroplast thylakoid membrane. Its function is as follows. Component of the cytochrome b6-f complex, which mediates electron transfer between photosystem II (PSII) and photosystem I (PSI), cyclic electron flow around PSI, and state transitions. The protein is Cytochrome b6-f complex subunit 4 of Coffea arabica (Arabian coffee).